The primary structure comprises 275 residues: NAD kinase (275 aa).

Catalysis depends on Asp66, which acts as the Proton acceptor. NAD(+) is bound by residues 66–67 (DG), His71, 135–136 (NE), Lys146, Arg163, Asp165, and 176–181 (TAYAMS).

It belongs to the NAD kinase family. The cofactor is a divalent metal cation.

The protein resides in the cytoplasm. The enzyme catalyses NAD(+) + ATP = ADP + NADP(+) + H(+). Its function is as follows. Involved in the regulation of the intracellular balance of NAD and NADP, and is a key enzyme in the biosynthesis of NADP. Catalyzes specifically the phosphorylation on 2'-hydroxyl of the adenosine moiety of NAD to yield NADP. In Methanosphaera stadtmanae (strain ATCC 43021 / DSM 3091 / JCM 11832 / MCB-3), this protein is NAD kinase.